We begin with the raw amino-acid sequence, 254 residues long: N(G),N(G)-dimethylarginine dimethylaminohydrolase (254 aa).

Residues Leu-18, Asp-60, 65–66 (ED), Arg-85, and Arg-132 contribute to the substrate site. The Proton donor role is filled by His-162. His-162 contacts Zn(2+). Ile-243 contacts substrate. Position 249 (Cys-249) interacts with Zn(2+). The active-site Nucleophile is the Cys-249.

Belongs to the DDAH family. Homodimer.

The enzyme catalyses N(omega),N(omega)-dimethyl-L-arginine + H2O = dimethylamine + L-citrulline. It carries out the reaction N(omega)-methyl-L-arginine + H2O = L-citrulline + methylamine. With respect to regulation, inhibited by zinc ions. Competitively inhibited by lysine. Hydrolyzes N(G),N(G)-dimethyl-L-arginine (ADMA) and N(G)-monomethyl-L-arginine (MMA). This Pseudomonas aeruginosa (strain ATCC 15692 / DSM 22644 / CIP 104116 / JCM 14847 / LMG 12228 / 1C / PRS 101 / PAO1) protein is N(G),N(G)-dimethylarginine dimethylaminohydrolase.